Here is a 101-residue protein sequence, read N- to C-terminus: Small ribosomal subunit protein uS10 (101 aa).

This sequence belongs to the universal ribosomal protein uS10 family. Part of the 30S ribosomal subunit.

In terms of biological role, involved in the binding of tRNA to the ribosomes. The chain is Small ribosomal subunit protein uS10 from Amoebophilus asiaticus (strain 5a2).